The following is a 489-amino-acid chain: Membrane-bound lytic murein transglycosylase F (489 aa).

The N-terminal stretch at 1–32 is a signal peptide; sequence MFALTAYRLRCAAWLLATGIFLLLAGCSEAKA. Positions 33-268 are non-LT domain; it reads PTALERVQKE…RLKDRYYGHV (236 aa). The tract at residues 269–489 is LT domain; it reads DVLGYVGAYT…PEEDSGDEKL (221 aa). The active site involves Glu315. The interval 466–489 is disordered; the sequence is AESGLHLPGVNKTRPEEDSGDEKL. Basic and acidic residues predominate over residues 478-489; sequence TRPEEDSGDEKL.

The protein in the N-terminal section; belongs to the bacterial solute-binding protein 3 family. This sequence in the C-terminal section; belongs to the transglycosylase Slt family.

It localises to the cell outer membrane. It catalyses the reaction Exolytic cleavage of the (1-&gt;4)-beta-glycosidic linkage between N-acetylmuramic acid (MurNAc) and N-acetylglucosamine (GlcNAc) residues in peptidoglycan, from either the reducing or the non-reducing ends of the peptidoglycan chains, with concomitant formation of a 1,6-anhydrobond in the MurNAc residue.. Murein-degrading enzyme that degrades murein glycan strands and insoluble, high-molecular weight murein sacculi, with the concomitant formation of a 1,6-anhydromuramoyl product. Lytic transglycosylases (LTs) play an integral role in the metabolism of the peptidoglycan (PG) sacculus. Their lytic action creates space within the PG sacculus to allow for its expansion as well as for the insertion of various structures such as secretion systems and flagella. This is Membrane-bound lytic murein transglycosylase F from Pseudomonas aeruginosa (strain UCBPP-PA14).